We begin with the raw amino-acid sequence, 180 residues long: NADH-quinone oxidoreductase subunit I (180 aa).

4Fe-4S ferredoxin-type domains are found at residues 50–80 and 90–119; these read LTRD…LQKA and EFFR…MTPD. [4Fe-4S] cluster-binding residues include Cys60, Cys63, Cys66, Cys70, Cys99, Cys102, Cys105, and Cys109.

This sequence belongs to the complex I 23 kDa subunit family. NDH-1 is composed of 14 different subunits. Subunits NuoA, H, J, K, L, M, N constitute the membrane sector of the complex. It depends on [4Fe-4S] cluster as a cofactor.

The protein resides in the cell inner membrane. It catalyses the reaction a quinone + NADH + 5 H(+)(in) = a quinol + NAD(+) + 4 H(+)(out). Functionally, NDH-1 shuttles electrons from NADH, via FMN and iron-sulfur (Fe-S) centers, to quinones in the respiratory chain. The immediate electron acceptor for the enzyme in this species is believed to be ubiquinone. Couples the redox reaction to proton translocation (for every two electrons transferred, four hydrogen ions are translocated across the cytoplasmic membrane), and thus conserves the redox energy in a proton gradient. The sequence is that of NADH-quinone oxidoreductase subunit I from Acinetobacter baylyi (strain ATCC 33305 / BD413 / ADP1).